A 106-amino-acid chain; its full sequence is Pyrimidine/purine nucleoside phosphorylase (106 aa).

This sequence belongs to the nucleoside phosphorylase PpnP family.

It carries out the reaction a purine D-ribonucleoside + phosphate = a purine nucleobase + alpha-D-ribose 1-phosphate. The catalysed reaction is adenosine + phosphate = alpha-D-ribose 1-phosphate + adenine. The enzyme catalyses cytidine + phosphate = cytosine + alpha-D-ribose 1-phosphate. It catalyses the reaction guanosine + phosphate = alpha-D-ribose 1-phosphate + guanine. It carries out the reaction inosine + phosphate = alpha-D-ribose 1-phosphate + hypoxanthine. The catalysed reaction is thymidine + phosphate = 2-deoxy-alpha-D-ribose 1-phosphate + thymine. The enzyme catalyses uridine + phosphate = alpha-D-ribose 1-phosphate + uracil. It catalyses the reaction xanthosine + phosphate = alpha-D-ribose 1-phosphate + xanthine. Catalyzes the phosphorolysis of diverse nucleosides, yielding D-ribose 1-phosphate and the respective free bases. Can use uridine, adenosine, guanosine, cytidine, thymidine, inosine and xanthosine as substrates. Also catalyzes the reverse reactions. The chain is Pyrimidine/purine nucleoside phosphorylase from Burkholderia vietnamiensis (strain G4 / LMG 22486) (Burkholderia cepacia (strain R1808)).